A 246-amino-acid chain; its full sequence is 1-(5-phosphoribosyl)-5-[(5-phosphoribosylamino)methylideneamino] imidazole-4-carboxamide isomerase (246 aa).

D10 acts as the Proton acceptor in catalysis. Residue D135 is the Proton donor of the active site.

It belongs to the HisA/HisF family.

The protein resides in the cytoplasm. It catalyses the reaction 1-(5-phospho-beta-D-ribosyl)-5-[(5-phospho-beta-D-ribosylamino)methylideneamino]imidazole-4-carboxamide = 5-[(5-phospho-1-deoxy-D-ribulos-1-ylimino)methylamino]-1-(5-phospho-beta-D-ribosyl)imidazole-4-carboxamide. Its pathway is amino-acid biosynthesis; L-histidine biosynthesis; L-histidine from 5-phospho-alpha-D-ribose 1-diphosphate: step 4/9. In Methanococcoides burtonii (strain DSM 6242 / NBRC 107633 / OCM 468 / ACE-M), this protein is 1-(5-phosphoribosyl)-5-[(5-phosphoribosylamino)methylideneamino] imidazole-4-carboxamide isomerase.